The sequence spans 298 residues: MVTRRALHFVFKVGNRFQTVHFFRDVLGMQVLRHEEFEEGCKAACNGPYDGKWSKTMVGFGPEDDHFVAELTYNYGIGDYKLGNDFMGLTLASSQAVSNARRLEWPLSKVAEGVFETEAPGGYKFYLQDRSPSQSDPVLKVTLAVSDLQKSLNYWSNLLGMKIYEQDEEKKWALLGYADDQCKLELQGIQGAVDHSAAFGRIAFSCPQKELPDLEDLMKRESQSILTPLVSLDTPGKATVQVVILADPDGHEICFVGDEAFRELSKMDPKGSKLLDDAMAADKSDEWFATRNKPKASG.

Residues 5 to 130 form the VOC 1 domain; sequence RALHFVFKVG…GGYKFYLQDR (126 aa). K109 carries the N6-succinyllysine modification. A Phosphoserine modification is found at S131. Residues 137-258 form the VOC 2 domain; that stretch reads PVLKVTLAVS…DGHEICFVGD (122 aa). At K273 the chain carries N6-succinyllysine.

Belongs to the glyoxalase I family. Interacts with NUDT9.

The protein localises to the mitochondrion. This Rattus norvegicus (Rat) protein is Glyoxalase domain-containing protein 4 (Glod4).